The chain runs to 200 residues: Histone chaperone asf1a-B (200 aa).

The protein belongs to the ASF1 family. Interacts with histone H3 (including both histone H3.1 and H3.3) and histone H4.

The protein resides in the nucleus. Functionally, histone chaperone that facilitates histone deposition and histone exchange and removal during nucleosome assembly and disassembly. This is Histone chaperone asf1a-B (asf1ab) from Xenopus laevis (African clawed frog).